The following is a 380-amino-acid chain: Kappa-type opioid receptor (380 aa).

Residues 1-57 (MEPPVQIFRGEPGPTCSPSTCLPPNGSGWFPGWAEPDGNGSAGSEDVLLEPAHISPV) are Extracellular-facing. 2 N-linked (GlcNAc...) asparagine glycosylation sites follow: asparagine 25 and asparagine 39. The helical transmembrane segment at 58-85 (ILVIITAVYSVVFVVGLVGNSLVMFVII) threads the bilayer. The Cytoplasmic segment spans residues 86–95 (RYTKMKTATN). The helical transmembrane segment at 96 to 119 (IYIFNLALADALVTTTMPFQSTVY) threads the bilayer. Residues 120–132 (LMNSWPFGDVLCK) lie on the Extracellular side of the membrane. Cysteine 131 and cysteine 210 are disulfide-bonded. A helical membrane pass occupies residues 133 to 154 (VVISIDYYNMFTSIFTLTMMSV). Residues 155–173 (DRYIAVCHPVKALDFRTPL) lie on the Cytoplasmic side of the membrane. Residues 174 to 196 (KAKIINICIWILSSSVGISAIVL) form a helical membrane-spanning segment. At 197–222 (GGTKVREDMEVIECSLQFPDDDYSWW) the chain is on the extracellular side. The chain crosses the membrane as a helical span at residues 223–247 (DLFMKVCVFVFAFVIPVLIIIVCYT). Residues 248–274 (LMILRLKSVRLLSGSREKDRNLRRITR) lie on the Cytoplasmic side of the membrane. A helical transmembrane segment spans residues 275–296 (LVLVVVAVFVVCWTPIHIFILV). The Extracellular portion of the chain corresponds to 297-311 (EALGSTAHSTAALSS). A helical membrane pass occupies residues 312-333 (YYFCIALGYTNSSLNPILYAFL). At 334-380 (DENFKRCFRDFCFPIKMRMERQSTSRVRNTVQDPAYVREVDGVNKPV) the chain is on the cytoplasmic side. A lipid anchor (S-palmitoyl cysteine) is attached at cysteine 345.

This sequence belongs to the G-protein coupled receptor 1 family. Interacts with NHERF1. Interacts with GABARAPL1.

It localises to the cell membrane. G-protein coupled opioid receptor that functions as a receptor for endogenous alpha-neoendorphins and dynorphins, but has low affinity for beta-endorphins. Also functions as a receptor for various synthetic opioids and for the psychoactive diterpene salvinorin A. Ligand binding causes a conformation change that triggers signaling via guanine nucleotide-binding proteins (G proteins) and modulates the activity of down-stream effectors, such as adenylate cyclase. Signaling leads to the inhibition of adenylate cyclase activity. Inhibits neurotransmitter release by reducing calcium ion currents and increasing potassium ion conductance. Plays a role in the perception of pain. Plays a role in mediating reduced physical activity upon treatment with synthetic opioids. Plays a role in the regulation of salivation in response to synthetic opioids. May play a role in arousal and regulation of autonomic and neuroendocrine functions. In Bos taurus (Bovine), this protein is Kappa-type opioid receptor (OPRK1).